The sequence spans 420 residues: Gamma-glutamyl phosphate reductase (420 aa).

The protein belongs to the gamma-glutamyl phosphate reductase family.

The protein resides in the cytoplasm. The enzyme catalyses L-glutamate 5-semialdehyde + phosphate + NADP(+) = L-glutamyl 5-phosphate + NADPH + H(+). It participates in amino-acid biosynthesis; L-proline biosynthesis; L-glutamate 5-semialdehyde from L-glutamate: step 2/2. Functionally, catalyzes the NADPH-dependent reduction of L-glutamate 5-phosphate into L-glutamate 5-semialdehyde and phosphate. The product spontaneously undergoes cyclization to form 1-pyrroline-5-carboxylate. In Chlorobium luteolum (strain DSM 273 / BCRC 81028 / 2530) (Pelodictyon luteolum), this protein is Gamma-glutamyl phosphate reductase.